Reading from the N-terminus, the 377-residue chain is NADH dehydrogenase [ubiquinone] 1 alpha subcomplex subunit 9, mitochondrial (377 aa).

A mitochondrion-targeting transit peptide spans 1–35 (MAAAVRFQVVRALPMSRPAISAAATSVFCSSSHRQ). Lysine 175 is subject to N6-succinyllysine. N6-acetyllysine occurs at positions 189 and 370.

Belongs to the complex I NDUFA9 subunit family. As to quaternary structure, complex I is composed of 45 different subunits. This a component of the hydrophobic protein fraction. Interacts with BLOC1S1. Interacts with SLC2A4. Interacts with CLOCK. Interacts with RAB5IF. FAD is required as a cofactor. Post-translationally, acetylated on lysine residues. BLOC1S1 is required for acetylation. Acetylated by CLOCK in a circadian manner. As to expression, expressed by the principal cells of the epididymis. Detected in flagella of epididymal sperm (at protein level).

It localises to the mitochondrion matrix. Functionally, accessory subunit of the mitochondrial membrane respiratory chain NADH dehydrogenase (Complex I), that is believed not to be involved in catalysis. Complex I functions in the transfer of electrons from NADH to the respiratory chain. The immediate electron acceptor for the enzyme is believed to be ubiquinone. The protein is NADH dehydrogenase [ubiquinone] 1 alpha subcomplex subunit 9, mitochondrial of Rattus norvegicus (Rat).